A 188-amino-acid polypeptide reads, in one-letter code: Protein Cripto (188 aa).

The signal sequence occupies residues 1–30 (MDCRKMARFSYSVIWIMAISKVFELGLVAG). Residues 78–107 (LNRTCCLNGGTCMLGSFCACPPSFYGRNCE) form the EGF-like domain. Asn79 carries N-linked (GlcNAc...) asparagine glycosylation. 6 disulfides stabilise this stretch: Cys82-Cys89, Cys83-Cys95, Cys97-Cys106, Cys115-Cys133, Cys128-Cys149, and Cys131-Cys140. Asp150 carries GPI-anchor amidated aspartate lipidation. Positions 151-188 (GLVMDEHLVASRTPELPPSARTTTFMLVGICLSIQSYY) are cleaved as a propeptide — removed in mature form.

This sequence belongs to the EGF-CFC (Cripto-1/FRL1/Cryptic) family. Interacts with the activin type-1 receptor ACVR1B. The GPI-anchor is attached to the protein in the endoplasmic reticulum and serves to target the protein to the cell surface. There, it is processed by GPI processing phospholipase A2 (TMEM8A), removing an acyl-chain at the sn-2 position of GPI and releasing CRIPTO as a lysophosphatidylinositol-bearing form, which is further cleaved by phospholipase D (GPLD1) into a soluble form. As to expression, preferentially expressed in gastric and colorectal carcinomas than in their normal counterparts. Expressed in breast and lung.

Its subcellular location is the cell membrane. It localises to the secreted. Its function is as follows. GPI-anchored cell membrane protein involved in Nodal signaling. Cell-associated CRIPTO acts as a Nodal coreceptor in cis. Shedding of CRIPTO by TMEM8A modulates Nodal signaling by allowing soluble CRIPTO to act as a Nodal coreceptor on other cells. Could play a role in the determination of the epiblastic cells that subsequently give rise to the mesoderm. The sequence is that of Protein Cripto from Homo sapiens (Human).